Reading from the N-terminus, the 425-residue chain is MSDHQNRGQDFSLEADSELRFEIEQKDAKVLVTLVNGFAELFGTELVKKKKYEFGMGAKVAIFTYQGCVLHVTGKMDVCYISKETPMVQYVNCHAALEQFRTEAEEKDRRGPVAMVVGPTDVGKSTLCRILLNYAVRVGRRPLYADLDVGQGAIAISGNVATILIERPASVEEGFPKTAPLVYHFGHKSPSGNSVLYNAVVSKMAEVTLQSLNGNKRTKSSGIIVNTCGWVKGHGYAHLLHAARAYGACAIFVLDQERLYNELLRDVPSSVHVVLLPKSGGVVERSKELRHECRDQRIKEYFYGNARAPFYPFSFEVKFQELRLYKIGAPPLPDSCMPIGMKAEDNKTKVVAVTPTPALIHHVLALSFAESVDDDVIGTNIAGFCCVTEVDMERQVVMLLSPQPRPLPPNALLLWSELQFMDNHT.

ATP is bound by residues E18, K59, and D121–T126.

Belongs to the Clp1 family. Clp1 subfamily.

The protein localises to the nucleus. Its function is as follows. Required for endonucleolytic cleavage during polyadenylation-dependent pre-mRNA 3'-end formation. The sequence is that of Protein CLP1 homolog (cbc) from Drosophila pseudoobscura pseudoobscura (Fruit fly).